Consider the following 226-residue polypeptide: Thiamine-phosphate synthase (226 aa).

4-amino-2-methyl-5-(diphosphooxymethyl)pyrimidine contacts are provided by residues 46 to 50 (QFRDK) and Asp-83. Residues Asp-84 and Asp-103 each coordinate Mg(2+). Ser-122 is a 4-amino-2-methyl-5-(diphosphooxymethyl)pyrimidine binding site. 149-151 (TQS) is a binding site for 2-[(2R,5Z)-2-carboxy-4-methylthiazol-5(2H)-ylidene]ethyl phosphate. Lys-152 lines the 4-amino-2-methyl-5-(diphosphooxymethyl)pyrimidine pocket. 2-[(2R,5Z)-2-carboxy-4-methylthiazol-5(2H)-ylidene]ethyl phosphate-binding positions include Gly-181 and 201–202 (IT).

Belongs to the thiamine-phosphate synthase family. Mg(2+) serves as cofactor.

The enzyme catalyses 2-[(2R,5Z)-2-carboxy-4-methylthiazol-5(2H)-ylidene]ethyl phosphate + 4-amino-2-methyl-5-(diphosphooxymethyl)pyrimidine + 2 H(+) = thiamine phosphate + CO2 + diphosphate. The catalysed reaction is 2-(2-carboxy-4-methylthiazol-5-yl)ethyl phosphate + 4-amino-2-methyl-5-(diphosphooxymethyl)pyrimidine + 2 H(+) = thiamine phosphate + CO2 + diphosphate. It catalyses the reaction 4-methyl-5-(2-phosphooxyethyl)-thiazole + 4-amino-2-methyl-5-(diphosphooxymethyl)pyrimidine + H(+) = thiamine phosphate + diphosphate. The protein operates within cofactor biosynthesis; thiamine diphosphate biosynthesis; thiamine phosphate from 4-amino-2-methyl-5-diphosphomethylpyrimidine and 4-methyl-5-(2-phosphoethyl)-thiazole: step 1/1. Its function is as follows. Condenses 4-methyl-5-(beta-hydroxyethyl)thiazole monophosphate (THZ-P) and 2-methyl-4-amino-5-hydroxymethyl pyrimidine pyrophosphate (HMP-PP) to form thiamine monophosphate (TMP). The protein is Thiamine-phosphate synthase of Haemophilus influenzae (strain 86-028NP).